Reading from the N-terminus, the 460-residue chain is MTQEKRSLHKTPPDGGWGWMIVIGCFFVTVCTRAVTRCISIFFVEFQSYFAQDYARTAWIHSIVDCSTMLCAPIGSYVSNHFSCQVGIILGGVLASTGLVLSSFATSLEYLYLTLGVLTGLGFALCYSPAIAMVGKYFEKRKALAYGIAMSGSGIGTFILAPVVQLLIEQFSWRGALLILGGFVSNLCVCGALMRPISLKEDSLHYPLKREPQLDSSCSPLCQDCSHKKLCYCTTKEYHFLLKPKFIILAVSFLFLAYGCSPPFVYLVPYSLSVGVSHQEAAFLMSILGIVDIVGNITFGWVTDRRFLKKHRYCCYLIAVGLDGLCCLFLPILTCFQLLVPFSVMFGYFDGAYVALIPVITGDVVGTSNLSSALGVVFFLHAVPYLLSPPIAGWLVDTTGDYTAAFLLSGFSMIFCSILLGLAKIINRIKKNPQATVVRSSDIKQEVWTNGDVSCLNAIS.

Topologically, residues 1 to 10 (MTQEKRSLHK) are cytoplasmic. 12 helical membrane-spanning segments follow: residues 11–31 (TPPD…VTVC), 58–78 (AWIH…GSYV), 86–106 (VGII…SFAT), 115–135 (LGVL…AMVG), 148–168 (IAMS…QLLI), 177–197 (LLIL…MRPI), 246–266 (FIIL…PFVY), 282–302 (AFLM…FGWV), 329–349 (FLPI…FGYF), 354–374 (VALI…SSAL), 376–396 (VVFF…GWLV), and 406–426 (FLLS…AKII). Residues 427-460 (NRIKKNPQATVVRSSDIKQEVWTNGDVSCLNAIS) are Cytoplasmic-facing.

This sequence belongs to the major facilitator superfamily. Monocarboxylate porter (TC 2.A.1.13) family.

It localises to the cell membrane. The protein localises to the basolateral cell membrane. It catalyses the reaction creatine(in) = creatine(out). The enzyme catalyses guanidinoacetate(in) = guanidinoacetate(out). In terms of biological role, functions as a transporter for creatine and as well for its precursor guanidinoacetate. Transport of creatine and GAA is independent of resting membrane potential and extracellular Na(+), Cl(-), or pH. Contributes to the process of creatine biosynthesis and distribution. In Xenopus laevis (African clawed frog), this protein is Monocarboxylate transporter 12 (slc16a12).